Consider the following 559-residue polypeptide: Protein QNR-71 (559 aa).

The N-terminal stretch at 1–22 (MSQAHRHLALLLPAEAVLCAAA) is a signal peptide. At 23–487 (MRFQDVLSNG…NGGSSSGTTK (465 aa)) the chain is on the extracellular side. Asn-92, Asn-133, Asn-145, Asn-149, Asn-192, Asn-199, Asn-248, Asn-274, Asn-307, and Asn-311 each carry an N-linked (GlcNAc...) asparagine glycan. A PKD domain is found at 239 to 326 (VSMSQKHDRN…IIPVPCKPVT (88 aa)). The tract at residues 329–356 (PSLPTPAVTTDASSNSDPSAPNEMAEDN) is disordered. Residues 335-347 (AVTTDASSNSDPS) are compositionally biased toward polar residues. Asn-459 carries N-linked (GlcNAc...) asparagine glycosylation. A helical membrane pass occupies residues 488-508 (GVFIFLGLLAVFGAIGAFVLY). Topologically, residues 509–559 (KRYKQYKPIERSAGQAENQEGLSAYVSNFKAFFFPKSTERNPLLKSKPGIV) are cytoplasmic.

This sequence belongs to the PMEL/NMB family. As to expression, melanocyte-specific, restricted to the pigmented layer of the retina and the epidermis.

The protein localises to the membrane. Could be involved in melanogenesis. This is Protein QNR-71 (QNR-71) from Coturnix japonica (Japanese quail).